The chain runs to 417 residues: Phosphoglycerate kinase 2 (417 aa).

Position 2 is an N-acetylserine (S2). 2 positions are modified to phosphoserine: S2 and S4. An N6-acetyllysine modification is found at K11. Residues V23, D24, F25, N26, Q38, and R39 each coordinate (2R)-3-phosphoglycerate. Residue K48 is modified to N6-acetyllysine. Positions 62, 63, 65, and 66 each coordinate (2R)-3-phosphoglycerate. Residues K75, K86, and K97 each carry the N6-acetyllysine modification. L122 and R123 together coordinate (2R)-3-phosphoglycerate. K131 and K146 each carry N6-acetyllysine. Residues H170 and R171 each coordinate (2R)-3-phosphoglycerate. The residue at position 196 (Y196) is a Phosphotyrosine. K199 carries the post-translational modification N6-acetyllysine. Residue G214 participates in ADP binding. G214 contributes to the CDP binding site. The AMP site is built by A215 and K216. Residue A215 coordinates ATP. A215 contacts Mg(2+). Mg(2+) is bound by residues A218 and D219. D219 contributes to the CDP binding site. Position 220 (K220) interacts with AMP. ATP is bound at residue K220. Residue G238 coordinates ADP. Position 238 (G238) interacts with CDP. G239 lines the AMP pocket. G239 lines the ATP pocket. An N6-acetyllysine mark is found at K267 and K291. G313 contacts AMP. G313 contacts ATP. Residues G338 and F343 each coordinate CDP. F343 is a binding site for ADP. E344 serves as a coordination point for AMP. 3 residues coordinate ATP: E344, D375, and T376. D375 is a Mg(2+) binding site.

Belongs to the phosphoglycerate kinase family. In terms of assembly, monomer. Requires Mg(2+) as cofactor.

It is found in the cytoplasm. The enzyme catalyses (2R)-3-phosphoglycerate + ATP = (2R)-3-phospho-glyceroyl phosphate + ADP. The protein operates within carbohydrate degradation; glycolysis; pyruvate from D-glyceraldehyde 3-phosphate: step 2/5. Essential for sperm motility and male fertility but is not required for the completion of spermatogenesis. In Macaca fascicularis (Crab-eating macaque), this protein is Phosphoglycerate kinase 2 (PGK2).